The chain runs to 347 residues: Tetraacyldisaccharide 4'-kinase (347 aa).

ATP is bound at residue 54 to 61 (TVGGAGKT).

It belongs to the LpxK family.

The enzyme catalyses a lipid A disaccharide + ATP = a lipid IVA + ADP + H(+). The protein operates within glycolipid biosynthesis; lipid IV(A) biosynthesis; lipid IV(A) from (3R)-3-hydroxytetradecanoyl-[acyl-carrier-protein] and UDP-N-acetyl-alpha-D-glucosamine: step 6/6. In terms of biological role, transfers the gamma-phosphate of ATP to the 4'-position of a tetraacyldisaccharide 1-phosphate intermediate (termed DS-1-P) to form tetraacyldisaccharide 1,4'-bis-phosphate (lipid IVA). The polypeptide is Tetraacyldisaccharide 4'-kinase (Rhizobium etli (strain CIAT 652)).